Reading from the N-terminus, the 198-residue chain is Large ribosomal subunit protein bL25 (198 aa).

It belongs to the bacterial ribosomal protein bL25 family. CTC subfamily. As to quaternary structure, part of the 50S ribosomal subunit; part of the 5S rRNA/L5/L18/L25 subcomplex. Contacts the 5S rRNA. Binds to the 5S rRNA independently of L5 and L18.

In terms of biological role, this is one of the proteins that binds to the 5S RNA in the ribosome where it forms part of the central protuberance. The sequence is that of Large ribosomal subunit protein bL25 from Phocaeicola vulgatus (strain ATCC 8482 / DSM 1447 / JCM 5826 / CCUG 4940 / NBRC 14291 / NCTC 11154) (Bacteroides vulgatus).